A 333-amino-acid polypeptide reads, in one-letter code: Probable endo-beta-1,4-glucanase B (333 aa).

A signal peptide spans 1–17 (MKFRNLFFAAVAGSAVA). N-linked (GlcNAc...) asparagine glycosylation is found at N37 and N100. E160 (proton donor) is an active-site residue. E267 serves as the catalytic Nucleophile.

Belongs to the glycosyl hydrolase 5 (cellulase A) family.

It is found in the secreted. The catalysed reaction is Endohydrolysis of (1-&gt;4)-beta-D-glucosidic linkages in cellulose, lichenin and cereal beta-D-glucans.. Its function is as follows. Has endoglucanase activity on substrates containing beta-1,4 glycosidic bonds, like in carboxymethylcellulose (CMC), hydroxyethylcellulose (HEC) and beta-glucan. Involved in the degradation of complex natural cellulosic substrates. This is Probable endo-beta-1,4-glucanase B (eglB) from Aspergillus oryzae (strain ATCC 42149 / RIB 40) (Yellow koji mold).